Consider the following 368-residue polypeptide: tRNA-specific 2-thiouridylase MnmA (368 aa).

ATP-binding positions include Gly12–Ser19 and Met38. Residues Asn98–Asp100 are interaction with target base in tRNA. The active-site Nucleophile is Cys103. Residues Cys103 and Cys200 are joined by a disulfide bond. Gly128 is a binding site for ATP. Positions Lys150 to Gln152 are interaction with tRNA. Catalysis depends on Cys200, which acts as the Cysteine persulfide intermediate. Positions Arg311–Tyr312 are interaction with tRNA.

The protein belongs to the MnmA/TRMU family.

The protein localises to the cytoplasm. It carries out the reaction S-sulfanyl-L-cysteinyl-[protein] + uridine(34) in tRNA + AH2 + ATP = 2-thiouridine(34) in tRNA + L-cysteinyl-[protein] + A + AMP + diphosphate + H(+). Functionally, catalyzes the 2-thiolation of uridine at the wobble position (U34) of tRNA, leading to the formation of s(2)U34. The chain is tRNA-specific 2-thiouridylase MnmA from Aeromonas hydrophila subsp. hydrophila (strain ATCC 7966 / DSM 30187 / BCRC 13018 / CCUG 14551 / JCM 1027 / KCTC 2358 / NCIMB 9240 / NCTC 8049).